The chain runs to 212 residues: Large ribosomal subunit protein uL3 (212 aa).

Gln153 carries the N5-methylglutamine modification.

Belongs to the universal ribosomal protein uL3 family. As to quaternary structure, part of the 50S ribosomal subunit. Forms a cluster with proteins L14 and L19. Post-translationally, methylated by PrmB.

One of the primary rRNA binding proteins, it binds directly near the 3'-end of the 23S rRNA, where it nucleates assembly of the 50S subunit. This Shewanella pealeana (strain ATCC 700345 / ANG-SQ1) protein is Large ribosomal subunit protein uL3.